Here is a 3753-residue protein sequence, read N- to C-terminus: Intermembrane lipid transfer protein VPS13C (3753 aa).

The 114-residue stretch at 3 to 116 folds into the Chorein N-terminal domain; that stretch reads LESVVADLLN…LQDVKQKELS (114 aa). Ser-132 bears the Phosphoserine mark. A compositionally biased stretch (basic residues) spans 150 to 164; that stretch reads GRKRKKHKKHFKKPF. A disordered region spans residues 150–176; that stretch reads GRKRKKHKKHFKKPFKGLDRSKDKPKE. A compositionally biased stretch (basic and acidic residues) spans 165–176; that stretch reads KGLDRSKDKPKE. Thr-614 is modified (phosphothreonine). Ser-619 is subject to Phosphoserine. The residue at position 624 (Thr-624) is a Phosphothreonine. Ser-737, Ser-842, Ser-872, and Ser-874 each carry phosphoserine. An FFAT motif is present at residues 877–883; it reads EYFDAED. Phosphoserine occurs at positions 1979 and 2473. Residues 2415 to 3309 are required for late endosome/lysosome localization; sequence DYSLKDRAPF…IQQDIDALNA (895 aa). In terms of domain architecture, SHR-BD spans 2766–3016; it reads LSVFSPYWLI…RLFAWADPTG (251 aa). Positions 3310–3753 are required for lipid droplet localization; sequence ELMETSMTDM…VRLLRPQLPS (444 aa). Residues Arg-3519 and Arg-3526 each carry the omega-N-methylarginine modification. At Lys-3538 the chain carries N6-acetyllysine. Ser-3641 is subject to Phosphoserine.

The protein belongs to the VPS13 family. As to expression, widely expressed.

The protein localises to the mitochondrion outer membrane. The protein resides in the lipid droplet. It localises to the endoplasmic reticulum membrane. It is found in the lysosome membrane. Its subcellular location is the late endosome membrane. In terms of biological role, mediates the transfer of lipids between membranes at organelle contact sites. Necessary for proper mitochondrial function and maintenance of mitochondrial transmembrane potential. Involved in the regulation of PINK1/PRKN-mediated mitophagy in response to mitochondrial depolarization. This is Intermembrane lipid transfer protein VPS13C from Homo sapiens (Human).